We begin with the raw amino-acid sequence, 268 residues long: 1,4-dihydroxy-2-naphthoyl-CoA synthase (268 aa).

Substrate contacts are provided by residues 30–31 (VL), 70–74 (VGGDQ), 114–118 (YAVGG), S140, and S146. 139-141 (QSG) provides a ligand contact to hydrogencarbonate.

Belongs to the enoyl-CoA hydratase/isomerase family. MenB subfamily. Requires hydrogencarbonate as cofactor.

It is found in the plastid. Its subcellular location is the chloroplast. It catalyses the reaction 2-succinylbenzoyl-CoA + H(+) = 1,4-dihydroxy-2-naphthoyl-CoA + H2O. It participates in quinol/quinone metabolism; 1,4-dihydroxy-2-naphthoate biosynthesis; 1,4-dihydroxy-2-naphthoate from chorismate: step 6/7. The protein operates within quinol/quinone metabolism; menaquinone biosynthesis. Functionally, converts o-succinylbenzoyl-CoA (OSB-CoA) to 1,4-dihydroxy-2-naphthoyl-CoA (DHNA-CoA). This is 1,4-dihydroxy-2-naphthoyl-CoA synthase (menB) from Cyanidium caldarium (Red alga).